The following is a 634-amino-acid chain: 1-deoxy-D-xylulose-5-phosphate synthase (634 aa).

Residues His-79 and Gly-120–Ala-122 each bind thiamine diphosphate. Asp-151 serves as a coordination point for Mg(2+). Thiamine diphosphate-binding positions include Gly-152–Ser-153, Asn-180, Tyr-292, and Glu-376. Position 180 (Asn-180) interacts with Mg(2+).

It belongs to the transketolase family. DXPS subfamily. Homodimer. Requires Mg(2+) as cofactor. Thiamine diphosphate serves as cofactor.

The catalysed reaction is D-glyceraldehyde 3-phosphate + pyruvate + H(+) = 1-deoxy-D-xylulose 5-phosphate + CO2. Its pathway is metabolic intermediate biosynthesis; 1-deoxy-D-xylulose 5-phosphate biosynthesis; 1-deoxy-D-xylulose 5-phosphate from D-glyceraldehyde 3-phosphate and pyruvate: step 1/1. Functionally, catalyzes the acyloin condensation reaction between C atoms 2 and 3 of pyruvate and glyceraldehyde 3-phosphate to yield 1-deoxy-D-xylulose-5-phosphate (DXP). This is 1-deoxy-D-xylulose-5-phosphate synthase from Porphyromonas gingivalis (strain ATCC BAA-308 / W83).